Here is a 471-residue protein sequence, read N- to C-terminus: Ribulose bisphosphate carboxylase large chain (471 aa).

The residue at position 5 (lysine 5) is an N6,N6,N6-trimethyllysine. Substrate contacts are provided by asparagine 114 and threonine 164. The Proton acceptor role is filled by lysine 166. Lysine 168 contributes to the substrate binding site. Positions 192, 194, and 195 each coordinate Mg(2+). Lysine 192 carries the N6-carboxylysine modification. Histidine 285 serves as the catalytic Proton acceptor. Substrate is bound by residues arginine 286, histidine 318, and serine 370.

The protein belongs to the RuBisCO large chain family. Type I subfamily. Heterohexadecamer of 8 large chains and 8 small chains; disulfide-linked. The disulfide link is formed within the large subunit homodimers. The cofactor is Mg(2+). In terms of processing, the disulfide bond which can form in the large chain dimeric partners within the hexadecamer appears to be associated with oxidative stress and protein turnover.

The protein localises to the plastid. The protein resides in the chloroplast. The enzyme catalyses 2 (2R)-3-phosphoglycerate + 2 H(+) = D-ribulose 1,5-bisphosphate + CO2 + H2O. It carries out the reaction D-ribulose 1,5-bisphosphate + O2 = 2-phosphoglycolate + (2R)-3-phosphoglycerate + 2 H(+). Functionally, ruBisCO catalyzes two reactions: the carboxylation of D-ribulose 1,5-bisphosphate, the primary event in carbon dioxide fixation, as well as the oxidative fragmentation of the pentose substrate in the photorespiration process. Both reactions occur simultaneously and in competition at the same active site. The polypeptide is Ribulose bisphosphate carboxylase large chain (Schlumbergera truncata (Thanksgiving cactus)).